A 183-amino-acid chain; its full sequence is uncharacterized protein (183 aa).

The protein belongs to the chlamydial CPn_0803/CT_584/TC_0873 family.

This is an uncharacterized protein from Chlamydia muridarum (strain MoPn / Nigg).